A 335-amino-acid polypeptide reads, in one-letter code: Endo-beta-N-acetylglucosaminidase F2 (335 aa).

Residues 1–45 (MKTANFSFALCLSVVIMLFIKCTRSEQDLSVTKDAIAQKSGVTVS) form the signal peptide. The 261-residue stretch at 61 to 321 (QISAGYYRTW…SSNDNTLRAP (261 aa)) folds into the GH18 domain. O-linked (Man...) serine glycosylation is found at S73, S89, and S143. Catalysis depends on E171, which acts as the Proton donor.

This sequence belongs to the glycosyl hydrolase 18 family. In terms of assembly, monomer. In terms of processing, carbohydrates at Ser-73, Ser-89 and Ser-143 consist of (2-OMe)Man1-4GlcNAcU1-4GlcU1-4Glc1-4(2-OMe)GlcU1-4[(2-OMe)Rham1-2]Man.

The protein resides in the secreted. It carries out the reaction an N(4)-(oligosaccharide-(1-&gt;3)-[oligosaccharide-(1-&gt;6)]-beta-D-Man-(1-&gt;4)-beta-D-GlcNAc-(1-&gt;4)-alpha-D-GlcNAc)-L-asparaginyl-[protein] + H2O = an oligosaccharide-(1-&gt;3)-[oligosaccharide-(1-&gt;6)]-beta-D-Man-(1-&gt;4)-D-GlcNAc + N(4)-(N-acetyl-beta-D-glucosaminyl)-L-asparaginyl-[protein]. Functionally, endohydrolysis of the di-N-acetylchitobiosyl unit in high-mannose glycopeptides and glycoproteins. Complex biantennary glycans are the preferred substrates. Tri- and tetraantennary glycans are not hydrolyzed, and high mannose glycans are very poor substrates. The chain is Endo-beta-N-acetylglucosaminidase F2 (endOF2) from Elizabethkingia meningoseptica (Chryseobacterium meningosepticum).